The primary structure comprises 295 residues: Inositol polyphosphate multikinase IPK2 (295 aa).

Positions 1 to 21 are disordered; sequence MASDLRPPEHQVAGHRASADK.

The protein belongs to the inositol phosphokinase (IPK) family.

It carries out the reaction 1D-myo-inositol 1,4,5-trisphosphate + 2 ATP = 1D-myo-inositol 1,3,4,5,6-pentakisphosphate + 2 ADP + 2 H(+). The catalysed reaction is 1D-myo-inositol 1,3,4,6-tetrakisphosphate + ATP = 1D-myo-inositol 1,3,4,5,6-pentakisphosphate + ADP + H(+). Inositol phosphate kinase with a broad substrate specificity. Phosphorylates inositol 1,4,5-trisphosphate (Ins(1,4,5)P3), inositol 1,4,5,6-tetrakisphosphate (Ins(1,4,5,6)P4), inositol 1,3,4,5-tetrakisphosphate (Ins(1,3,4,5)P4), inositol 1,3,4,6-tetrakisphosphate (Ins(1,3,4,6)P4) and inositol 1,2,3,4,6-pentakisphosphate (Ins(1,2,3,4,6)P5) but not inositol 1,4-bisphosphate (Ins(1,4)P2), inositol 1,3,4-trisphosphate (Ins(1,3,4)P3), inositol 1,2,6-trisphosphate (Ins(1,2,6)P3), inositol 3,4,5,6-tetrakisphosphate (Ins(3,4,5,6)P4), inositol 1,3,4,5,6-pentakisphosphate (Ins(1,3,4,5,6)P5), inositol 1,2,4,5,6-pentakisphosphate (Ins(1,2,4,5,6)P5) or inositol hexakisphosphate (InsP6). Regulates pollen and root development probably through the regulation of InsP3-mediated calcium accumulation. The sequence is that of Inositol polyphosphate multikinase IPK2 from Oryza sativa subsp. indica (Rice).